Here is a 466-residue protein sequence, read N- to C-terminus: ATP synthase subunit beta (466 aa).

Gly155–Thr162 contributes to the ATP binding site.

The protein belongs to the ATPase alpha/beta chains family. As to quaternary structure, F-type ATPases have 2 components, CF(1) - the catalytic core - and CF(0) - the membrane proton channel. CF(1) has five subunits: alpha(3), beta(3), gamma(1), delta(1), epsilon(1). CF(0) has three main subunits: a(1), b(2) and c(9-12). The alpha and beta chains form an alternating ring which encloses part of the gamma chain. CF(1) is attached to CF(0) by a central stalk formed by the gamma and epsilon chains, while a peripheral stalk is formed by the delta and b chains.

It is found in the cell inner membrane. The catalysed reaction is ATP + H2O + 4 H(+)(in) = ADP + phosphate + 5 H(+)(out). Functionally, produces ATP from ADP in the presence of a proton gradient across the membrane. The catalytic sites are hosted primarily by the beta subunits. The sequence is that of ATP synthase subunit beta from Azoarcus sp. (strain BH72).